Consider the following 64-residue polypeptide: Large ribosomal subunit protein uL30 (64 aa).

The tract at residues 1–22 is disordered; sequence MSEQVKRVRVTQVGSPIGRKPG.

It belongs to the universal ribosomal protein uL30 family. As to quaternary structure, part of the 50S ribosomal subunit.

The protein is Large ribosomal subunit protein uL30 of Acidiphilium cryptum (strain JF-5).